A 258-amino-acid polypeptide reads, in one-letter code: Imidazole glycerol phosphate synthase subunit HisF (258 aa).

Residues Asp11 and Asp130 contribute to the active site.

This sequence belongs to the HisA/HisF family. Heterodimer of HisH and HisF.

It is found in the cytoplasm. It catalyses the reaction 5-[(5-phospho-1-deoxy-D-ribulos-1-ylimino)methylamino]-1-(5-phospho-beta-D-ribosyl)imidazole-4-carboxamide + L-glutamine = D-erythro-1-(imidazol-4-yl)glycerol 3-phosphate + 5-amino-1-(5-phospho-beta-D-ribosyl)imidazole-4-carboxamide + L-glutamate + H(+). It participates in amino-acid biosynthesis; L-histidine biosynthesis; L-histidine from 5-phospho-alpha-D-ribose 1-diphosphate: step 5/9. In terms of biological role, IGPS catalyzes the conversion of PRFAR and glutamine to IGP, AICAR and glutamate. The HisF subunit catalyzes the cyclization activity that produces IGP and AICAR from PRFAR using the ammonia provided by the HisH subunit. This is Imidazole glycerol phosphate synthase subunit HisF from Azorhizobium caulinodans (strain ATCC 43989 / DSM 5975 / JCM 20966 / LMG 6465 / NBRC 14845 / NCIMB 13405 / ORS 571).